A 268-amino-acid chain; its full sequence is Ubiquinone biosynthesis protein COQ4 homolog, mitochondrial (268 aa).

Zn(2+) contacts are provided by His171, Asp172, His175, and Glu187.

The protein belongs to the COQ4 family. Component of a multi-subunit COQ enzyme complex. Zn(2+) is required as a cofactor.

The protein resides in the mitochondrion inner membrane. It carries out the reaction a 4-hydroxy-3-methoxy-5-(all-trans-polyprenyl)benzoate + H(+) = a 2-methoxy-6-(all-trans-polyprenyl)phenol + CO2. It functions in the pathway cofactor biosynthesis; ubiquinone biosynthesis. Lyase that catalyzes the C1-decarboxylation of 4-hydroxy-3-methoxy-5-(all-trans-polyprenyl)benzoic acid into 2-methoxy-6-(all-trans-polyprenyl)phenol during ubiquinone biosynthesis. This Drosophila yakuba (Fruit fly) protein is Ubiquinone biosynthesis protein COQ4 homolog, mitochondrial.